Consider the following 299-residue polypeptide: Probable endonuclease 4 (299 aa).

His69, His110, Glu145, Asp179, His182, His214, Asp227, His229, and Glu259 together coordinate Zn(2+).

Belongs to the AP endonuclease 2 family. It depends on Zn(2+) as a cofactor.

The enzyme catalyses Endonucleolytic cleavage to 5'-phosphooligonucleotide end-products.. Endonuclease IV plays a role in DNA repair. It cleaves phosphodiester bonds at apurinic or apyrimidinic (AP) sites, generating a 3'-hydroxyl group and a 5'-terminal sugar phosphate. The polypeptide is Probable endonuclease 4 (Geobacillus kaustophilus (strain HTA426)).